An 81-amino-acid polypeptide reads, in one-letter code: Photosystem I iron-sulfur center (81 aa).

2 4Fe-4S ferredoxin-type domains span residues 2-31 (SHAV…MVPW) and 37-68 (GQIA…IRVY). Positions 11, 14, 17, 21, 48, 51, 54, and 58 each coordinate [4Fe-4S] cluster.

As to quaternary structure, the cyanobacterial PSI reaction center is composed of one copy each of PsaA,B,C,D,E,F,I,J,K,L,M and X, and forms trimeric complexes. [4Fe-4S] cluster is required as a cofactor.

The protein localises to the cellular thylakoid membrane. The enzyme catalyses reduced [plastocyanin] + hnu + oxidized [2Fe-2S]-[ferredoxin] = oxidized [plastocyanin] + reduced [2Fe-2S]-[ferredoxin]. In terms of biological role, apoprotein for the two 4Fe-4S centers FA and FB of photosystem I (PSI); essential for photochemical activity. FB is the terminal electron acceptor of PSI, donating electrons to ferredoxin. The C-terminus interacts with PsaA/B/D and helps assemble the protein into the PSI complex. Required for binding of PsaD and PsaE to PSI. PSI is a plastocyanin/cytochrome c6-ferredoxin oxidoreductase, converting photonic excitation into a charge separation, which transfers an electron from the donor P700 chlorophyll pair to the spectroscopically characterized acceptors A0, A1, FX, FA and FB in turn. This Synechococcus sp. (strain WH7803) protein is Photosystem I iron-sulfur center.